The following is a 276-amino-acid chain: Phosphatidylglycerol--prolipoprotein diacylglyceryl transferase (276 aa).

Transmembrane regions (helical) follow at residues 17 to 37 (LAIHWYGLTYLAAFGLFFFLA), 63 to 83 (ILFLGVMGVVIGGRLGYCLFY), and 95 to 115 (ILAVWQGGMSFHGGMLGVLAS). Arg-146 is a binding site for a 1,2-diacyl-sn-glycero-3-phospho-(1'-sn-glycerol). A run of 3 helical transmembrane segments spans residues 182–202 (SQVYQFLLEGLLLFVLLWLYA), 209–229 (GQVSGAFLVGYGVFRFIAEYF), and 235–255 (FLGILALGLSMGQWLCVPMIV).

It belongs to the Lgt family.

The protein resides in the cell inner membrane. The catalysed reaction is L-cysteinyl-[prolipoprotein] + a 1,2-diacyl-sn-glycero-3-phospho-(1'-sn-glycerol) = an S-1,2-diacyl-sn-glyceryl-L-cysteinyl-[prolipoprotein] + sn-glycerol 1-phosphate + H(+). The protein operates within protein modification; lipoprotein biosynthesis (diacylglyceryl transfer). In terms of biological role, catalyzes the transfer of the diacylglyceryl group from phosphatidylglycerol to the sulfhydryl group of the N-terminal cysteine of a prolipoprotein, the first step in the formation of mature lipoproteins. This Polaromonas sp. (strain JS666 / ATCC BAA-500) protein is Phosphatidylglycerol--prolipoprotein diacylglyceryl transferase.